The sequence spans 226 residues: Thioredoxin domain-containing protein 9 (226 aa).

A Thioredoxin domain is found at 75–180; the sequence is EIGSERDFFQ…TTETLEWRLG (106 aa). Phosphoserine is present on residues Ser-188, Ser-221, and Ser-223.

As to quaternary structure, forms ternary complexes with the chaperonin TCP1 complex, spanning the cylindrical chaperonin cavity and contacting at least 2 subunits. Expressed in testis, liver, heart, kidney, brain, spleen and lung.

Its subcellular location is the cytoplasm. The protein localises to the nucleus. It is found in the cytoskeleton. The protein resides in the microtubule organizing center. It localises to the centrosome. Its subcellular location is the midbody. Significantly diminishes the chaperonin TCP1 complex ATPase activity, thus negatively impacts protein folding, including that of actin or tubulin. This is Thioredoxin domain-containing protein 9 (Txndc9) from Mus musculus (Mouse).